The chain runs to 236 residues: DNA repair protein RecO (236 aa).

The protein belongs to the RecO family.

Its function is as follows. Involved in DNA repair and RecF pathway recombination. This is DNA repair protein RecO from Stutzerimonas stutzeri (strain A1501) (Pseudomonas stutzeri).